A 209-amino-acid chain; its full sequence is Protein TIC 20-v, chloroplastic (209 aa).

The transit peptide at 1 to 49 (MAIISQFFAPLPSLTGTLTLTGRSFLPLNLDTQFPKPRLSRDRAATLVL) directs the protein to the chloroplast. A run of 4 helical transmembrane segments spans residues 63-83 (IISA…GKFI), 103-123 (AFKS…FVVV), 132-152 (VRFN…PDLL), and 173-193 (TVFL…LFGL).

Belongs to the Tic20 family. As to quaternary structure, part of the Tic complex. Expressed in leaves, siliques and roots.

The protein localises to the plastid. It is found in the chloroplast inner membrane. In terms of biological role, may be involved in protein precursor import into chloroplasts. Not redundant with TIC20-I, TIC20-II or TIC20-IV. The sequence is that of Protein TIC 20-v, chloroplastic (TIC20-V) from Arabidopsis thaliana (Mouse-ear cress).